The primary structure comprises 94 residues: Small ribosomal subunit protein bS20 (94 aa).

This sequence belongs to the bacterial ribosomal protein bS20 family.

Its function is as follows. Binds directly to 16S ribosomal RNA. The polypeptide is Small ribosomal subunit protein bS20 (Aquifex aeolicus (strain VF5)).